A 162-amino-acid chain; its full sequence is MAELIIVYFSSKSNNTHRFVQKLGLPAQRIPVDNRPLEVSTHYLLIVPTYAAGGSDAKGAVPKQVIRFLNNPNNRKHCKGVISSGNTNFGDTFALAGPIISQKLQVPLLHQFELLGTATDVKKVQAIFARLKHHTHDKQKQINNLITERTHPCHKPMRHTSH.

This sequence belongs to the NrdI family.

Functionally, probably involved in ribonucleotide reductase function. The polypeptide is Protein NrdI (Streptococcus pyogenes serotype M28 (strain MGAS6180)).